The chain runs to 671 residues: DNA ligase (671 aa).

Residues 36-40 (DAEYD), 85-86 (SL), and Glu116 each bind NAD(+). Lys118 (N6-AMP-lysine intermediate) is an active-site residue. NAD(+) is bound by residues Arg139, Glu176, Lys292, and Lys316. Cys410, Cys413, Cys428, and Cys434 together coordinate Zn(2+). A BRCT domain is found at 591–671 (QKGGRFQGMT…QFLAMFSEKE (81 aa)).

The protein belongs to the NAD-dependent DNA ligase family. LigA subfamily. It depends on Mg(2+) as a cofactor. The cofactor is Mn(2+).

It catalyses the reaction NAD(+) + (deoxyribonucleotide)n-3'-hydroxyl + 5'-phospho-(deoxyribonucleotide)m = (deoxyribonucleotide)n+m + AMP + beta-nicotinamide D-nucleotide.. DNA ligase that catalyzes the formation of phosphodiester linkages between 5'-phosphoryl and 3'-hydroxyl groups in double-stranded DNA using NAD as a coenzyme and as the energy source for the reaction. It is essential for DNA replication and repair of damaged DNA. In Acidithiobacillus ferrooxidans (strain ATCC 23270 / DSM 14882 / CIP 104768 / NCIMB 8455) (Ferrobacillus ferrooxidans (strain ATCC 23270)), this protein is DNA ligase.